Here is a 396-residue protein sequence, read N- to C-terminus: Phosphopentomutase (396 aa).

The Mn(2+) site is built by Asp-13, Asp-288, His-293, Asp-329, His-330, and His-341.

It belongs to the phosphopentomutase family. The cofactor is Mn(2+).

It localises to the cytoplasm. The catalysed reaction is 2-deoxy-alpha-D-ribose 1-phosphate = 2-deoxy-D-ribose 5-phosphate. It carries out the reaction alpha-D-ribose 1-phosphate = D-ribose 5-phosphate. It functions in the pathway carbohydrate degradation; 2-deoxy-D-ribose 1-phosphate degradation; D-glyceraldehyde 3-phosphate and acetaldehyde from 2-deoxy-alpha-D-ribose 1-phosphate: step 1/2. Isomerase that catalyzes the conversion of deoxy-ribose 1-phosphate (dRib-1-P) and ribose 1-phosphate (Rib-1-P) to deoxy-ribose 5-phosphate (dRib-5-P) and ribose 5-phosphate (Rib-5-P), respectively. The polypeptide is Phosphopentomutase (Clostridium perfringens (strain 13 / Type A)).